The primary structure comprises 1070 residues: Carbamoyl phosphate synthase large chain (1070 aa).

Residues 1 to 401 (MPKRDDIKTI…ALLKAVRSLE (401 aa)) are carboxyphosphate synthetic domain. ATP is bound by residues R129, R169, G175, G176, K208, I210, E215, G241, I242, H243, Q284, and E298. The ATP-grasp 1 domain occupies 133-327 (RDLMNELGEP…IAKLAAKIAV (195 aa)). Residues Q284, E298, and N300 each contribute to the Mg(2+) site. Mn(2+)-binding residues include Q284, E298, and N300. Positions 402-546 (IGADHLLLEE…YSTYEDENES (145 aa)) are oligomerization domain. Positions 547-929 (IRSSKESVIV…ALYKGFVASG (383 aa)) are carbamoyl phosphate synthetic domain. The ATP-grasp 2 domain maps to 671-861 (EKALEILQIP…MANVATRVIL (191 aa)). ATP-binding residues include R707, R746, V748, E752, G777, V778, H779, S780, Q820, and E832. Residues Q820, E832, and N834 each contribute to the Mg(2+) site. The Mn(2+) site is built by Q820, E832, and N834. Residues 930–1070 (TTMHDYGTVL…SEVKQPKARV (141 aa)) form the MGS-like domain. The allosteric domain stretch occupies residues 930 to 1070 (TTMHDYGTVL…SEVKQPKARV (141 aa)).

Belongs to the CarB family. As to quaternary structure, composed of two chains; the small (or glutamine) chain promotes the hydrolysis of glutamine to ammonia, which is used by the large (or ammonia) chain to synthesize carbamoyl phosphate. Tetramer of heterodimers (alpha,beta)4. Mg(2+) is required as a cofactor. Requires Mn(2+) as cofactor.

It catalyses the reaction hydrogencarbonate + L-glutamine + 2 ATP + H2O = carbamoyl phosphate + L-glutamate + 2 ADP + phosphate + 2 H(+). The enzyme catalyses hydrogencarbonate + NH4(+) + 2 ATP = carbamoyl phosphate + 2 ADP + phosphate + 2 H(+). Its pathway is amino-acid biosynthesis; L-arginine biosynthesis; carbamoyl phosphate from bicarbonate: step 1/1. It participates in pyrimidine metabolism; UMP biosynthesis via de novo pathway; (S)-dihydroorotate from bicarbonate: step 1/3. Large subunit of the glutamine-dependent carbamoyl phosphate synthetase (CPSase). CPSase catalyzes the formation of carbamoyl phosphate from the ammonia moiety of glutamine, carbonate, and phosphate donated by ATP, constituting the first step of 2 biosynthetic pathways, one leading to arginine and/or urea and the other to pyrimidine nucleotides. The large subunit (synthetase) binds the substrates ammonia (free or transferred from glutamine from the small subunit), hydrogencarbonate and ATP and carries out an ATP-coupled ligase reaction, activating hydrogencarbonate by forming carboxy phosphate which reacts with ammonia to form carbamoyl phosphate. This Listeria innocua serovar 6a (strain ATCC BAA-680 / CLIP 11262) protein is Carbamoyl phosphate synthase large chain.